The following is a 497-amino-acid chain: Peptidoglycan endopeptidase RipA (497 aa).

The first 39 residues, 1–39 (MRRTVRALATRVHGRVCAVPLVVGMLLATALYGGGPAAA), serve as a signal peptide directing secretion. A compositionally biased stretch (basic and acidic residues) spans 177-192 (ARLAKEKADQAARDAE). Disordered stretches follow at residues 177 to 198 (ARLAKEKADQAARDAESSQDNA) and 253 to 297 (APAA…GQNW). Residues 255–273 (AAAPAPVPNSAPAPVPGAQ) are compositionally biased toward pro residues. The NlpC/P60 domain maps to 365–497 (REAVEYVIRR…TPYVTRLIEY (133 aa)). Catalysis depends on cysteine 408, which acts as the Nucleophile. Histidine 457 serves as the catalytic Proton acceptor. Glutamate 469 is a catalytic residue.

It belongs to the peptidase C40 family. In terms of assembly, monomer.

Its subcellular location is the secreted. Functionally, peptidoglycan endopeptidase that cleaves the bond between D-glutamate and meso-diaminopimelate. Binds and degrades high-molecular weight peptidoglycan. Required for normal separation of daughter cells after cell division and for cell wall integrity. This Mycolicibacterium smegmatis (strain ATCC 700084 / mc(2)155) (Mycobacterium smegmatis) protein is Peptidoglycan endopeptidase RipA (ripA).